Consider the following 512-residue polypeptide: Retinaldehyde dehydrogenase 3 (512 aa).

A disordered region spans residues 1–22 (MATTNGAVENGQPDGKPPALPR). Residue Ala2 is modified to N-acetylalanine. NAD(+) is bound by residues Lys204, Glu207, and 257 to 262 (GSTEVG). Catalysis depends on Glu280, which acts as the Proton acceptor. The active-site Nucleophile is the Cys314. Gln361 and Glu411 together coordinate NAD(+).

Belongs to the aldehyde dehydrogenase family. As to quaternary structure, homotetramer. Detected in embryonic head (at protein level). Ventral retina.

It is found in the cytoplasm. It catalyses the reaction retinal + NAD(+) + H2O = retinoate + NADH + 2 H(+). The catalysed reaction is all-trans-retinal + NAD(+) + H2O = all-trans-retinoate + NADH + 2 H(+). The enzyme catalyses all-trans-13,14-dihydroretinal + NAD(+) + H2O = all-trans-13,14-dihydroretinoate + NADH + 2 H(+). Its pathway is cofactor metabolism; retinol metabolism. In terms of biological role, catalyzes the NAD-dependent oxidation of aldehyde substrates, such as all-trans-retinal and all-trans-13,14-dihydroretinal, to their corresponding carboxylic acids, all-trans-retinoate and all-trans-13,14-dihydroretinoate, respectively. High specificity for all-trans-retinal as substrate, can also accept acetaldehyde as substrate in vitro but with lower affinity. Required for the biosynthesis of normal levels of retinoate in the embryonic ocular and nasal regions; a critical lipid in the embryonic development of the eye and the nasal region. The polypeptide is Retinaldehyde dehydrogenase 3 (Aldh1a3) (Mus musculus (Mouse)).